Here is a 629-residue protein sequence, read N- to C-terminus: MSILKAENLYKTYGDKTLFDHISFHIEENERIGLIGPNGTGKSTLLKVIAGLESIEEGEITKSGSVQVEFLHQDPELPAGQTVLEHIYSGESAVMKTLREYEKALYELGKDPENEQRQKHLLAAQAKMDANNAWDANTLAKTVLSKLGVNDVTKPVNELSGGQKKRVAIAKNLIQPADLLILDEPTNHLDNETIEWLEGYLSQYPGAVMLVTHDRYFLNRVTNRIYELERGSLYTYKGNYEVFLEKRAEREAQAEQKETKRQNLLRRELAWLRRGAKARSTKQKARIDRVETLKEQTGPQSSGSLDFAIGSHRLGKQVIEAENVMIAYDGRMLVDRFNELVIPGERIGIIGPNGIGKTTLLNALAGRHTPDGGDITIGQTVRIGYYTQDHSEMNGELKVIDYIKETAEVVKTADGDMITAEQMLERFLFPRSMQQTYIRKLSGGEKRRLYLLQVLMQEPNVLFLDEPTNDLDTETLSVLEDYIDQFPGVVITVSHDRYFLDRVVDRLIVFEGNGVISRFQGSYSDYMEESKAKKAAPKPAAEEKTAEAEPKKKRKKLSYKDQLEWDGIEDKIAQLEEKHEQLEADIAAAGSDFGKIQELMAEQAKTAEELEAAMDRWTELSLMIEELES.

Residues 4–255 (LKAENLYKTY…KRAEREAQAE (252 aa)) form the ABC transporter 1 domain. 36 to 43 (GPNGTGKS) provides a ligand contact to ATP. The tract at residues 284-304 (KARIDRVETLKEQTGPQSSGS) is disordered. Residues 285 to 294 (ARIDRVETLK) are compositionally biased toward basic and acidic residues. Polar residues predominate over residues 295–304 (EQTGPQSSGS). Positions 319–537 (IEAENVMIAY…EESKAKKAAP (219 aa)) constitute an ABC transporter 2 domain. 351-358 (GPNGIGKT) is a binding site for ATP. The disordered stretch occupies residues 530–555 (SKAKKAAPKPAAEEKTAEAEPKKKRK). The span at 540 to 550 (AAEEKTAEAEP) shows a compositional bias: basic and acidic residues. The stretch at 560–629 (KDQLEWDGIE…LSLMIEELES (70 aa)) forms a coiled coil.

This sequence belongs to the ABC transporter superfamily.

This is an uncharacterized protein from Bacillus subtilis (strain 168).